A 435-amino-acid chain; its full sequence is Sulfopropanediol 3-dehydrogenase (435 aa).

Positions 119, 181, and 204 each coordinate NAD(+). Zn(2+)-binding residues include Q249 and H252. Catalysis depends on proton acceptor residues E319 and H320. 2 residues coordinate Zn(2+): D353 and H412.

The protein belongs to the histidinol dehydrogenase family. HpsN subfamily. It depends on Zn(2+) as a cofactor.

It carries out the reaction (2R)-3-sulfopropanediol + 2 NAD(+) + H2O = (2R)-3-sulfolactate + 2 NADH + 3 H(+). Catalyzes the NAD-dependent oxidation of (R)-2,3-dihydroxypropane-1-sulfonate to (R)-3-sulfolactate. The polypeptide is Sulfopropanediol 3-dehydrogenase (Ruegeria pomeroyi (strain ATCC 700808 / DSM 15171 / DSS-3) (Silicibacter pomeroyi)).